A 154-amino-acid chain; its full sequence is 6,7-dimethyl-8-ribityllumazine synthase (154 aa).

5-amino-6-(D-ribitylamino)uracil-binding positions include Trp22, 56–58 (AWE), and 80–82 (CVI). 85–86 (DT) lines the (2S)-2-hydroxy-3-oxobutyl phosphate pocket. Catalysis depends on His88, which acts as the Proton donor. Asn113 is a binding site for 5-amino-6-(D-ribitylamino)uracil. Arg127 is a binding site for (2S)-2-hydroxy-3-oxobutyl phosphate.

Belongs to the DMRL synthase family. Forms an icosahedral capsid composed of 60 subunits, arranged as a dodecamer of pentamers.

The enzyme catalyses (2S)-2-hydroxy-3-oxobutyl phosphate + 5-amino-6-(D-ribitylamino)uracil = 6,7-dimethyl-8-(1-D-ribityl)lumazine + phosphate + 2 H2O + H(+). The protein operates within cofactor biosynthesis; riboflavin biosynthesis; riboflavin from 2-hydroxy-3-oxobutyl phosphate and 5-amino-6-(D-ribitylamino)uracil: step 1/2. Catalyzes the formation of 6,7-dimethyl-8-ribityllumazine by condensation of 5-amino-6-(D-ribitylamino)uracil with 3,4-dihydroxy-2-butanone 4-phosphate. This is the penultimate step in the biosynthesis of riboflavin. The sequence is that of 6,7-dimethyl-8-ribityllumazine synthase from Xanthomonas axonopodis pv. citri (strain 306).